The primary structure comprises 359 residues: Peptide chain release factor 1 (359 aa).

Residue Q235 is modified to N5-methylglutamine. The disordered stretch occupies residues A280 to I306.

This sequence belongs to the prokaryotic/mitochondrial release factor family. Methylated by PrmC. Methylation increases the termination efficiency of RF1.

It localises to the cytoplasm. Functionally, peptide chain release factor 1 directs the termination of translation in response to the peptide chain termination codons UAG and UAA. This is Peptide chain release factor 1 from Rhizobium johnstonii (strain DSM 114642 / LMG 32736 / 3841) (Rhizobium leguminosarum bv. viciae).